A 460-amino-acid chain; its full sequence is MATEAKRPKTGDEKSVLEPLNNFLLWCESVQLTLSDKVYLSKEGTAAEYGMLAKEDIEEGHVLFTIPREALLHQGTTKVKKVLEEGKKCLESASGWVPLLLSLMYEYTSSTSHWKPYLSLWPDFRTLDQPMFWSEEECDKLLKGTGIPESVITDLRKLQDEYNSVVLPFMKSHPDLWDPEKHNLELYKSLVAFVMAYSFQEPVEDDDEDEEDDEKKPNLPMMVPMADMLNHISKHNANLEYTPECLKMVSIRRIGKGEEVFNTYGQMANWQLLHMYGFAEPFPNNINETADIKMASVYKAAAQVARSEANQQLLEDKWKMLCEMEVVGEKGVFIFGQSGSLTYHELYTTLKVLCMSSQIFEDFRENEGWEEDDEDDDDKMEQDLSFEGLASLSVEWKRLLCVAATETLDSYNEDVETDRRLMEDQRALAELSSRERRALYVRLGQKNILQRIQQLTKPAS.

The region spanning 28–265 (ESVQLTLSDK…KGEEVFNTYG (238 aa)) is the SET domain.

The protein belongs to the class V-like SAM-binding methyltransferase superfamily. Histone-lysine methyltransferase family. SETD6 subfamily.

The protein resides in the nucleus. In terms of biological role, protein-lysine N-methyltransferase. In Danio rerio (Zebrafish), this protein is N-lysine methyltransferase setd6 (setd6).